We begin with the raw amino-acid sequence, 184 residues long: ATP synthase subunit b, chloroplastic (184 aa).

The chain crosses the membrane as a helical span at residues 31 to 49 (IINPSVVLSVLIYFGKGVL).

It belongs to the ATPase B chain family. F-type ATPases have 2 components, F(1) - the catalytic core - and F(0) - the membrane proton channel. F(1) has five subunits: alpha(3), beta(3), gamma(1), delta(1), epsilon(1). F(0) has four main subunits: a(1), b(1), b'(1) and c(10-14). The alpha and beta chains form an alternating ring which encloses part of the gamma chain. F(1) is attached to F(0) by a central stalk formed by the gamma and epsilon chains, while a peripheral stalk is formed by the delta, b and b' chains.

It is found in the plastid. The protein resides in the chloroplast thylakoid membrane. Functionally, f(1)F(0) ATP synthase produces ATP from ADP in the presence of a proton or sodium gradient. F-type ATPases consist of two structural domains, F(1) containing the extramembraneous catalytic core and F(0) containing the membrane proton channel, linked together by a central stalk and a peripheral stalk. During catalysis, ATP synthesis in the catalytic domain of F(1) is coupled via a rotary mechanism of the central stalk subunits to proton translocation. In terms of biological role, component of the F(0) channel, it forms part of the peripheral stalk, linking F(1) to F(0). The chain is ATP synthase subunit b, chloroplastic from Pinus koraiensis (Korean pine).